A 101-amino-acid polypeptide reads, in one-letter code: Venom peptide Pc (101 aa).

A signal peptide spans 1 to 20 (MSHLRIAVIFLCTLFALTAG).

The protein belongs to the scorpion La1-like peptide family. Contains 4 disulfide bonds. As to expression, expressed by the venom gland.

The protein resides in the secreted. This is Venom peptide Pc from Pandinus cavimanus (Tanzanian red clawed scorpion).